The following is a 504-amino-acid chain: Anaerobic nitric oxide reductase transcription regulator NorR (504 aa).

Position 57 is a 4-aspartylphosphate (Asp57). One can recognise a Sigma-54 factor interaction domain in the interval 187 to 416 (MIGLSPGMTQ…LEHAIHRAVV (230 aa)). ATP contacts are provided by residues 215–222 (GETGTGKE) and 278–287 (ADNGTLFLDE). Positions 479–498 (WAACARMLETDVANLHRLAK) form a DNA-binding region, H-T-H motif.

It participates in nitrogen metabolism; nitric oxide reduction. In terms of biological role, required for the expression of anaerobic nitric oxide (NO) reductase, acts as a transcriptional activator for at least the norVW operon. Activation also requires sigma-54. This is Anaerobic nitric oxide reductase transcription regulator NorR from Escherichia coli O157:H7.